Here is a 473-residue protein sequence, read N- to C-terminus: Photosystem II CP43 reaction center protein (473 aa).

Positions 1–14 (MKTLYSLRRFYPVE) are excised as a propeptide. Thr15 carries the N-acetylthreonine modification. A Phosphothreonine modification is found at Thr15. The next 5 membrane-spanning stretches (helical) occupy residues 69 to 93 (LFEVAHFVPEKPMYEQGLILLPHLA), 134 to 155 (LLGPETLEESFPFFGYVWKDRN), 178 to 200 (KALYFGGVYDTWAPGGGDVRKIT), 255 to 275 (KPFAWARRAFVWSGEAYLSYS), and 291 to 312 (WFNNTAYPSEFYGPTGPEASQA). Glu367 provides a ligand contact to [CaMn4O5] cluster. The chain crosses the membrane as a helical span at residues 447–471 (RARAAAAGFEKGIDRDLEPVLSMTP).

The protein belongs to the PsbB/PsbC family. PsbC subfamily. In terms of assembly, PSII is composed of 1 copy each of membrane proteins PsbA, PsbB, PsbC, PsbD, PsbE, PsbF, PsbH, PsbI, PsbJ, PsbK, PsbL, PsbM, PsbT, PsbX, PsbY, PsbZ, Psb30/Ycf12, at least 3 peripheral proteins of the oxygen-evolving complex and a large number of cofactors. It forms dimeric complexes. Binds multiple chlorophylls and provides some of the ligands for the Ca-4Mn-5O cluster of the oxygen-evolving complex. It may also provide a ligand for a Cl- that is required for oxygen evolution. PSII binds additional chlorophylls, carotenoids and specific lipids. is required as a cofactor.

Its subcellular location is the plastid. It is found in the chloroplast thylakoid membrane. Functionally, one of the components of the core complex of photosystem II (PSII). It binds chlorophyll and helps catalyze the primary light-induced photochemical processes of PSII. PSII is a light-driven water:plastoquinone oxidoreductase, using light energy to abstract electrons from H(2)O, generating O(2) and a proton gradient subsequently used for ATP formation. This is Photosystem II CP43 reaction center protein from Dioscorea elephantipes (Elephant's foot yam).